The sequence spans 201 residues: Peptidyl-tRNA hydrolase (201 aa).

Y14 provides a ligand contact to tRNA. Residue H19 is the Proton acceptor of the active site. Positions 64, 66, and 113 each coordinate tRNA. Residues 178–201 (PGPAMNRFNRKPEPPESGGEVAAK) form a disordered region.

This sequence belongs to the PTH family. Monomer.

It localises to the cytoplasm. It catalyses the reaction an N-acyl-L-alpha-aminoacyl-tRNA + H2O = an N-acyl-L-amino acid + a tRNA + H(+). In terms of biological role, hydrolyzes ribosome-free peptidyl-tRNAs (with 1 or more amino acids incorporated), which drop off the ribosome during protein synthesis, or as a result of ribosome stalling. Catalyzes the release of premature peptidyl moieties from peptidyl-tRNA molecules trapped in stalled 50S ribosomal subunits, and thus maintains levels of free tRNAs and 50S ribosomes. The sequence is that of Peptidyl-tRNA hydrolase from Koribacter versatilis (strain Ellin345).